The sequence spans 258 residues: Myelin proteolipid protein (258 aa).

The Cytoplasmic segment spans residues 1 to 22 (MFPVRHALLCKALGCYDCCIRC). 3 S-palmitoyl cysteine lipidation sites follow: cysteine 18, cysteine 19, and cysteine 22. A helical membrane pass occupies residues 23 to 48 (LGAVPYPSLVSTLLCFTGMALFCGCG). Residues 49-82 (HEALAHTEVLVETYFVRNIQDYVILASFIKYFQY) are Extracellular-facing. Residues 83–103 (VIYGLASFFFLYCILLLAEGF) form a helical membrane-spanning segment. Residues 104–128 (YTTSAVKQTFGEFRSTRCGRCLSLT) are Cytoplasmic-facing. 2 S-palmitoyl cysteine lipidation sites follow: cysteine 121 and cysteine 124. Residues 129–149 (FIIVTYVLAVIWLAVFAFTAI) traverse the membrane as a helical segment. Over 150 to 218 (PSSSSLIWHR…KTKEFFVTYD (69 aa)) the chain is Extracellular. Cysteines 181 and 200 form a disulfide. Residues 219–239 (LYIAAFAGAGIALLALFLYVV) form a helical membrane-spanning segment. The Cytoplasmic segment spans residues 240–258 (ATTYNYAVLRFLGRKGLRC).

The protein belongs to the myelin proteolipid protein family. In terms of tissue distribution, central nervous system. Highest levels in spinal cord and medulla oblongata.

It is found in the cell membrane. Its function is as follows. This is the major myelin protein from the central nervous system. It plays an important role in the formation or maintenance of the multilamellar structure of myelin. May be involved in neuron and glial cell differentiation. In Oncorhynchus mykiss (Rainbow trout), this protein is Myelin proteolipid protein (plp).